A 227-amino-acid polypeptide reads, in one-letter code: Cytochrome c oxidase subunit 2 (227 aa).

Topologically, residues 1–14 (MAYPMQLGFQDATS) are mitochondrial intermembrane. The chain crosses the membrane as a helical span at residues 15–45 (PIMEELLHFHDHTLMIVFLISSLVLYIISLM). Over 46-59 (LTTKLTHTSTMDAQ) the chain is Mitochondrial matrix. The helical transmembrane segment at 60-87 (EVETVWTILPAIILIMIALPSLRILYMM) threads the bilayer. The Mitochondrial intermembrane segment spans residues 88–227 (DEINNPSLTV…YFEKWSASML (140 aa)). The Cu cation site is built by H161, C196, E198, C200, H204, and M207. E198 provides a ligand contact to Mg(2+). Phosphotyrosine is present on Y218.

The protein belongs to the cytochrome c oxidase subunit 2 family. In terms of assembly, component of the cytochrome c oxidase (complex IV, CIV), a multisubunit enzyme composed of 14 subunits. The complex is composed of a catalytic core of 3 subunits MT-CO1, MT-CO2 and MT-CO3, encoded in the mitochondrial DNA, and 11 supernumerary subunits COX4I, COX5A, COX5B, COX6A, COX6B, COX6C, COX7A, COX7B, COX7C, COX8 and NDUFA4, which are encoded in the nuclear genome. The complex exists as a monomer or a dimer and forms supercomplexes (SCs) in the inner mitochondrial membrane with NADH-ubiquinone oxidoreductase (complex I, CI) and ubiquinol-cytochrome c oxidoreductase (cytochrome b-c1 complex, complex III, CIII), resulting in different assemblies (supercomplex SCI(1)III(2)IV(1) and megacomplex MCI(2)III(2)IV(2)). Found in a complex with TMEM177, COA6, COX18, COX20, SCO1 and SCO2. Interacts with TMEM177 in a COX20-dependent manner. Interacts with COX20. Interacts with COX16. Requires Cu cation as cofactor.

The protein localises to the mitochondrion inner membrane. It carries out the reaction 4 Fe(II)-[cytochrome c] + O2 + 8 H(+)(in) = 4 Fe(III)-[cytochrome c] + 2 H2O + 4 H(+)(out). In terms of biological role, component of the cytochrome c oxidase, the last enzyme in the mitochondrial electron transport chain which drives oxidative phosphorylation. The respiratory chain contains 3 multisubunit complexes succinate dehydrogenase (complex II, CII), ubiquinol-cytochrome c oxidoreductase (cytochrome b-c1 complex, complex III, CIII) and cytochrome c oxidase (complex IV, CIV), that cooperate to transfer electrons derived from NADH and succinate to molecular oxygen, creating an electrochemical gradient over the inner membrane that drives transmembrane transport and the ATP synthase. Cytochrome c oxidase is the component of the respiratory chain that catalyzes the reduction of oxygen to water. Electrons originating from reduced cytochrome c in the intermembrane space (IMS) are transferred via the dinuclear copper A center (CU(A)) of subunit 2 and heme A of subunit 1 to the active site in subunit 1, a binuclear center (BNC) formed by heme A3 and copper B (CU(B)). The BNC reduces molecular oxygen to 2 water molecules using 4 electrons from cytochrome c in the IMS and 4 protons from the mitochondrial matrix. This chain is Cytochrome c oxidase subunit 2 (MT-CO2), found in Capra hircus (Goat).